The following is a 507-amino-acid chain: ATP synthase subunit alpha (507 aa).

Position 169–176 (169–176) interacts with ATP; the sequence is GDRQIGKT.

It belongs to the ATPase alpha/beta chains family. F-type ATPases have 2 components, CF(1) - the catalytic core - and CF(0) - the membrane proton channel. CF(1) has five subunits: alpha(3), beta(3), gamma(1), delta(1), epsilon(1). CF(0) has three main subunits: a(1), b(2) and c(9-12). The alpha and beta chains form an alternating ring which encloses part of the gamma chain. CF(1) is attached to CF(0) by a central stalk formed by the gamma and epsilon chains, while a peripheral stalk is formed by the delta and b chains.

Its subcellular location is the cell inner membrane. The catalysed reaction is ATP + H2O + 4 H(+)(in) = ADP + phosphate + 5 H(+)(out). Functionally, produces ATP from ADP in the presence of a proton gradient across the membrane. The alpha chain is a regulatory subunit. In Desulfotalea psychrophila (strain LSv54 / DSM 12343), this protein is ATP synthase subunit alpha.